The following is a 319-amino-acid chain: Acetyl-coenzyme A carboxylase carboxyl transferase subunit alpha (319 aa).

Positions 34–295 (ELEEEVSKLK…KVRLKRDLAD (262 aa)) constitute a CoA carboxyltransferase C-terminal domain.

The protein belongs to the AccA family. Acetyl-CoA carboxylase is a heterohexamer composed of biotin carboxyl carrier protein (AccB), biotin carboxylase (AccC) and two subunits each of ACCase subunit alpha (AccA) and ACCase subunit beta (AccD).

The protein localises to the cytoplasm. The enzyme catalyses N(6)-carboxybiotinyl-L-lysyl-[protein] + acetyl-CoA = N(6)-biotinyl-L-lysyl-[protein] + malonyl-CoA. It functions in the pathway lipid metabolism; malonyl-CoA biosynthesis; malonyl-CoA from acetyl-CoA: step 1/1. Functionally, component of the acetyl coenzyme A carboxylase (ACC) complex. First, biotin carboxylase catalyzes the carboxylation of biotin on its carrier protein (BCCP) and then the CO(2) group is transferred by the carboxyltransferase to acetyl-CoA to form malonyl-CoA. The polypeptide is Acetyl-coenzyme A carboxylase carboxyl transferase subunit alpha (Pseudoalteromonas translucida (strain TAC 125)).